The primary structure comprises 264 residues: Proliferating cell nuclear antigen (264 aa).

A DNA-binding region spans residues 61-80 (RCDRNLAMGINMTSMAKIMK).

This sequence belongs to the PCNA family. Homotrimer. Forms a complex with activator 1 heteropentamer in the presence of ATP.

Its subcellular location is the nucleus. In terms of biological role, this protein is an auxiliary protein of DNA polymerase delta and is involved in the control of eukaryotic DNA replication by increasing the polymerase's processibility during elongation of the leading strand. In Styela clava (Sea squirt), this protein is Proliferating cell nuclear antigen (PCNA).